A 109-amino-acid polypeptide reads, in one-letter code: UPF0449 protein C19orf25 homolog (109 aa).

Tyrosine 63 is modified (phosphotyrosine).

This sequence belongs to the UPF0449 family.

The polypeptide is UPF0449 protein C19orf25 homolog (Rattus norvegicus (Rat)).